We begin with the raw amino-acid sequence, 189 residues long: Large ribosomal subunit protein eL18 (189 aa).

The protein belongs to the eukaryotic ribosomal protein eL18 family.

It is found in the cytoplasm. This chain is Large ribosomal subunit protein eL18 (RpL18), found in Drosophila pseudoobscura pseudoobscura (Fruit fly).